Here is a 474-residue protein sequence, read N- to C-terminus: Solute carrier family 49 member A3 (474 aa).

A disordered region spans residues 1 to 20 (MEGESAETEPLIQSSSAADR). 12 consecutive transmembrane segments (helical) span residues 38 to 58 (WFILSVLCLLNCSNAMAWLTF), 69 to 89 (LCVSLPLVNWLSLVFVLAAVV), 105 to 126 (CSLIGSSWLNACGCVLRVCGVL), 134 to 154 (VFAVVMCGQTLCALAQPLVIF), 175 to 195 (LASMANTVGLLLANLLSPLIV), 201 to 221 (LFLLLLIYSIPAAVACLLATL), 258 to 278 (WILLLCFGSGIGIFTCFSTLL), 290 to 310 (GFAGVCGAVSIVCGVAGAFLL), 326 to 346 (ICMCLTSVSCSAFAVVSQLPA), 349 to 369 (VLLVLVCCCFGLFGYSVYPVG), 388 to 408 (LIFTSGQIQAALYLLLLQALA), and 428 to 448 (VPVLVMAGVCAISSCVFVVFF).

Belongs to the major facilitator superfamily.

It is found in the membrane. The chain is Solute carrier family 49 member A3 (slc49a3) from Danio rerio (Zebrafish).